The chain runs to 212 residues: High frequency lysogenization protein HflD homolog (212 aa).

The protein belongs to the HflD family.

Its subcellular location is the cytoplasm. The protein localises to the cell inner membrane. This Pectobacterium carotovorum subsp. carotovorum (strain PC1) protein is High frequency lysogenization protein HflD homolog.